The following is a 124-amino-acid chain: Small ribosomal subunit protein uS12 (124 aa).

A 3-methylthioaspartic acid modification is found at D89.

This sequence belongs to the universal ribosomal protein uS12 family. As to quaternary structure, part of the 30S ribosomal subunit. Contacts proteins S8 and S17. May interact with IF1 in the 30S initiation complex.

Its function is as follows. With S4 and S5 plays an important role in translational accuracy. Interacts with and stabilizes bases of the 16S rRNA that are involved in tRNA selection in the A site and with the mRNA backbone. Located at the interface of the 30S and 50S subunits, it traverses the body of the 30S subunit contacting proteins on the other side and probably holding the rRNA structure together. The combined cluster of proteins S8, S12 and S17 appears to hold together the shoulder and platform of the 30S subunit. The protein is Small ribosomal subunit protein uS12 of Histophilus somni (strain 129Pt) (Haemophilus somnus).